The following is a 556-amino-acid chain: Transcription factor IIIB 70 kDa subunit (556 aa).

The segment at 8-41 adopts a TFIIB-type zinc-finger fold; that stretch reads SSRKCKNCGSTDFVRDISNTTNELICKVCGLVTE. Cysteine 12, cysteine 15, cysteine 33, and cysteine 36 together coordinate Zn(2+). 2 consecutive repeat copies span residues 98-174 and 193-272. The interval 98-272 is interaction with TBP and with the Pol III subunit C34; that stretch reads LKAVSYALNI…EETLQQRLNE (175 aa). Residues 284 to 556 form an interaction with TBP region; it reads KEFRDDETEV…DAINGLFGQK (273 aa). Disordered stretches follow at residues 287–309 and 477–501; these read RDDE…SFDK and ADLA…QSSA. Residues 295–309 show a composition bias toward basic and acidic residues; it reads EGERSAESKPPSFDK. Basic residues predominate over residues 486 to 495; that stretch reads LRKKRSKRTN.

It belongs to the TFIIB family. As to quaternary structure, TFIIIB comprises the TATA-binding protein (TBP), the B-related factor (BRF) and a 70 kDa polypeptide.

It is found in the nucleus. General activator of RNA polymerase III transcription. Interacts with TBP. Binds to Pol III subunit C34 and to the TAU135 component of TFIIIC. This Kluyveromyces lactis (strain ATCC 8585 / CBS 2359 / DSM 70799 / NBRC 1267 / NRRL Y-1140 / WM37) (Yeast) protein is Transcription factor IIIB 70 kDa subunit (TDS4).